The chain runs to 107 residues: MIIVTNTTKITKGNGHKLIERFNKVGKVETMSGFLGLEVLLTQNTVDYDEVTISTRWNAKEDFQGWTKSSAFKDAHSHQGGMPDYILDNKIAYYDVKVVRMPMAAAQ.

Positions 2 to 94 (IIVTNTTKIT…YILDNKIAYY (93 aa)) constitute an ABM domain. Asn6 is a binding site for Fe cation. Residue His76 coordinates heme.

This sequence belongs to the antibiotic biosynthesis monooxygenase family. Heme-degrading monooxygenase IsdG subfamily. In terms of assembly, homodimer.

It is found in the cytoplasm. It catalyses the reaction heme b + 3 reduced [NADPH--hemoprotein reductase] + 3 O2 = biliverdin IXalpha + CO + Fe(2+) + 3 oxidized [NADPH--hemoprotein reductase] + 3 H2O + H(+). In terms of biological role, allows bacterial pathogens to use the host heme as an iron source. Catalyzes the oxidative degradation of the heme macrocyclic porphyrin ring to the biliverdin in the presence of a suitable electron donor such as ascorbate or NADPH--cytochrome P450 reductase, with subsequent release of free iron. The chain is Heme-degrading monooxygenase from Bacillus mycoides (strain KBAB4) (Bacillus weihenstephanensis).